Reading from the N-terminus, the 134-residue chain is Profilin-3 (134 aa).

Residues C13 and C118 are joined by a disulfide bond. An Involved in PIP2 interaction motif is present at residues 84 to 100 (AVIRGKKGSGGITIKKT). Position 114 is a phosphothreonine (T114).

The protein belongs to the profilin family. In terms of assembly, occurs in many kinds of cells as a complex with monomeric actin in a 1:1 ratio. Post-translationally, phosphorylated by MAP kinases.

It is found in the cytoplasm. It localises to the cytoskeleton. In terms of biological role, binds to actin and affects the structure of the cytoskeleton. At high concentrations, profilin prevents the polymerization of actin, whereas it enhances it at low concentrations. By binding to PIP2, it inhibits the formation of IP3 and DG. This Olea europaea (Common olive) protein is Profilin-3 (PRO3).